Consider the following 490-residue polypeptide: GTPase Der (490 aa).

Residues proline 3–aspartate 166 enclose the EngA-type G 1 domain. GTP contacts are provided by residues glycine 9–serine 16, aspartate 56–isoleucine 60, and asparagine 118–aspartate 121. A disordered region spans residues lysine 164–serine 191. The segment covering aspartate 166–glycine 181 has biased composition (acidic residues). Over residues glutamate 182 to serine 191 the composition is skewed to basic and acidic residues. The 174-residue stretch at isoleucine 196 to valine 369 folds into the EngA-type G 2 domain. Residues glycine 202 to serine 209, aspartate 249 to valine 253, and asparagine 314 to aspartate 317 each bind GTP. A KH-like domain is found at threonine 370–glutamate 454. The tract at residues glycine 452–arginine 490 is disordered. Over residues asparagine 470–arginine 490 the composition is skewed to basic residues.

The protein belongs to the TRAFAC class TrmE-Era-EngA-EngB-Septin-like GTPase superfamily. EngA (Der) GTPase family. As to quaternary structure, associates with the 50S ribosomal subunit.

Its function is as follows. GTPase that plays an essential role in the late steps of ribosome biogenesis. The polypeptide is GTPase Der (Pseudomonas fluorescens (strain ATCC BAA-477 / NRRL B-23932 / Pf-5)).